A 405-amino-acid chain; its full sequence is Tryptophan synthase beta chain (405 aa).

K95 carries the N6-(pyridoxal phosphate)lysine modification.

It belongs to the TrpB family. As to quaternary structure, tetramer of two alpha and two beta chains. Pyridoxal 5'-phosphate is required as a cofactor.

The enzyme catalyses (1S,2R)-1-C-(indol-3-yl)glycerol 3-phosphate + L-serine = D-glyceraldehyde 3-phosphate + L-tryptophan + H2O. The protein operates within amino-acid biosynthesis; L-tryptophan biosynthesis; L-tryptophan from chorismate: step 5/5. The beta subunit is responsible for the synthesis of L-tryptophan from indole and L-serine. The protein is Tryptophan synthase beta chain of Pseudomonas entomophila (strain L48).